The primary structure comprises 306 residues: MALRVVTRALGSLSLTPRIAAVPGPSLLPAAQVTNNVLLQLPSASMLLPSRPLLTSVALSAKFVSWKSRTKYTTMPVKMRKSGGRNHTGRIQVHGIGGGHKQRYRMIDFLRFRPEQESKPGPFEEKVIVVRYDPCRSADIALVAGGNRKRWIIATENMKAGDTILNSDHIGRMAVAAREGDAHPLGALPVGTLINNVESEPGRGAQYIRAAGTCGVLLRKVNGTAIIQLPSKRQMQVLETCTATVGRVSNVDHNKRVIGKAGRNRWLGKRPNSGRWHRKGGWAGRKIRPLPPMKSYVKLPSAAAQN.

Residues 1–60 (MALRVVTRALGSLSLTPRIAAVPGPSLLPAAQVTNNVLLQLPSASMLLPSRPLLTSVALS) constitute a mitochondrion transit peptide.

Belongs to the universal ribosomal protein uL2 family. In terms of assembly, component of the mitochondrial ribosome large subunit (39S) which comprises a 16S rRNA and about 50 distinct proteins.

The protein localises to the mitochondrion. The polypeptide is Large ribosomal subunit protein uL2m (MRPL2) (Bos taurus (Bovine)).